A 264-amino-acid chain; its full sequence is Thymidylate synthase (264 aa).

Residue R21 participates in dUMP binding. Position 51 (H51) interacts with (6R)-5,10-methylene-5,6,7,8-tetrahydrofolate. 126 to 127 contacts dUMP; it reads RR. The active-site Nucleophile is the C146. Residues 166–169, N177, and 207–209 each bind dUMP; these read RSAD and HLY. (6R)-5,10-methylene-5,6,7,8-tetrahydrofolate is bound at residue D169. Position 263 (A263) interacts with (6R)-5,10-methylene-5,6,7,8-tetrahydrofolate.

It belongs to the thymidylate synthase family. Bacterial-type ThyA subfamily. Homodimer.

The protein resides in the cytoplasm. The enzyme catalyses dUMP + (6R)-5,10-methylene-5,6,7,8-tetrahydrofolate = 7,8-dihydrofolate + dTMP. Its pathway is pyrimidine metabolism; dTTP biosynthesis. Catalyzes the reductive methylation of 2'-deoxyuridine-5'-monophosphate (dUMP) to 2'-deoxythymidine-5'-monophosphate (dTMP) while utilizing 5,10-methylenetetrahydrofolate (mTHF) as the methyl donor and reductant in the reaction, yielding dihydrofolate (DHF) as a by-product. This enzymatic reaction provides an intracellular de novo source of dTMP, an essential precursor for DNA biosynthesis. This is Thymidylate synthase from Dechloromonas aromatica (strain RCB).